A 592-amino-acid chain; its full sequence is Glutathione-regulated potassium-efflux system protein KefB (592 aa).

The next 13 membrane-spanning stretches (helical) occupy residues 4–24 (SDFL…VPLA), 29–49 (IGAV…GLGF), 55–75 (EILH…GLEL), 87–107 (IFGV…GLLM), 115–135 (AAVV…LQLM), 152–172 (VLLF…LLAG), 177–197 (HFDW…LIGG), 207–227 (FIAA…LVLG), 230–250 (LFMD…GVLL), 268–288 (GLLL…GVLY), 291–311 (LLWV…VLYL), 324–344 (MQFA…FSTA), and 356–376 (ALLL…MKLV). One can recognise an RCK N-terminal domain in the interval 400–519 (KPQVIVVGFG…AGVTQFSRET (120 aa)).

The protein belongs to the monovalent cation:proton antiporter 2 (CPA2) transporter (TC 2.A.37) family. KefB subfamily. As to quaternary structure, interacts with the regulatory subunit KefG.

The protein localises to the cell inner membrane. Pore-forming subunit of a potassium efflux system that confers protection against electrophiles. Catalyzes K(+)/H(+) antiport. This chain is Glutathione-regulated potassium-efflux system protein KefB, found in Escherichia coli O157:H7.